The sequence spans 364 residues: Spermidine/putrescine import ATP-binding protein PotA (364 aa).

Residues 5–235 enclose the ABC transporter domain; sequence LSFKDVSKGF…PVNRFVADFI (231 aa). Position 37 to 44 (37 to 44) interacts with ATP; sequence GPSGCGKT.

This sequence belongs to the ABC transporter superfamily. Spermidine/putrescine importer (TC 3.A.1.11.1) family. In terms of assembly, the complex is composed of two ATP-binding proteins (PotA), two transmembrane proteins (PotB and PotC) and a solute-binding protein (PotD).

The protein resides in the cell membrane. It carries out the reaction ATP + H2O + polyamine-[polyamine-binding protein]Side 1 = ADP + phosphate + polyamineSide 2 + [polyamine-binding protein]Side 1.. Functionally, part of the ABC transporter complex PotABCD involved in spermidine/putrescine import. Responsible for energy coupling to the transport system. This is Spermidine/putrescine import ATP-binding protein PotA from Staphylococcus epidermidis (strain ATCC 12228 / FDA PCI 1200).